Reading from the N-terminus, the 258-residue chain is Phosphate import ATP-binding protein PstB (258 aa).

The region spanning 5–247 (IDVSGLNAYY…ERIFSNPSVQ (243 aa)) is the ABC transporter domain. An ATP-binding site is contributed by 37–44 (GPSGCGKS).

Belongs to the ABC transporter superfamily. Phosphate importer (TC 3.A.1.7) family. The complex is composed of two ATP-binding proteins (PstB), two transmembrane proteins (PstC and PstA) and a solute-binding protein (PstS).

It is found in the cell membrane. The catalysed reaction is phosphate(out) + ATP + H2O = ADP + 2 phosphate(in) + H(+). Functionally, part of the ABC transporter complex PstSACB involved in phosphate import. Responsible for energy coupling to the transport system. This chain is Phosphate import ATP-binding protein PstB, found in Streptomyces coelicolor (strain ATCC BAA-471 / A3(2) / M145).